Consider the following 210-residue polypeptide: Thymidylate kinase (210 aa).

Gly11–Thr18 lines the ATP pocket.

The protein belongs to the thymidylate kinase family.

The catalysed reaction is dTMP + ATP = dTDP + ADP. Its function is as follows. Phosphorylation of dTMP to form dTDP in both de novo and salvage pathways of dTTP synthesis. The chain is Thymidylate kinase (tmk) from Halalkalibacterium halodurans (strain ATCC BAA-125 / DSM 18197 / FERM 7344 / JCM 9153 / C-125) (Bacillus halodurans).